A 701-amino-acid polypeptide reads, in one-letter code: UvrABC system protein B (701 aa).

Residues 35–422 (RRIQGGAADT…GGDVVEQVIR (388 aa)) form the Helicase ATP-binding domain. Position 48-55 (48-55 (GATGTGKT)) interacts with ATP. The Beta-hairpin signature appears at 101 to 124 (YYDYYQPEAYVPQTDTYIEKDSSI). Positions 439-605 (QIDDLVHEIR…PLRKKIADIL (167 aa)) constitute a Helicase C-terminal domain. Residues 620-648 (ARSRGEKRGTPTPRSGALSGPDRVAEQAK) form a disordered region. The 36-residue stretch at 656–691 (AALVEQLTEQMHQAAADLQFELAARLRDEIKELKRE) folds into the UVR domain.

Belongs to the UvrB family. As to quaternary structure, forms a heterotetramer with UvrA during the search for lesions. Interacts with UvrC in an incision complex.

The protein localises to the cytoplasm. Functionally, the UvrABC repair system catalyzes the recognition and processing of DNA lesions. A damage recognition complex composed of 2 UvrA and 2 UvrB subunits scans DNA for abnormalities. Upon binding of the UvrA(2)B(2) complex to a putative damaged site, the DNA wraps around one UvrB monomer. DNA wrap is dependent on ATP binding by UvrB and probably causes local melting of the DNA helix, facilitating insertion of UvrB beta-hairpin between the DNA strands. Then UvrB probes one DNA strand for the presence of a lesion. If a lesion is found the UvrA subunits dissociate and the UvrB-DNA preincision complex is formed. This complex is subsequently bound by UvrC and the second UvrB is released. If no lesion is found, the DNA wraps around the other UvrB subunit that will check the other stand for damage. The chain is UvrABC system protein B from Thermobifida fusca (strain YX).